A 395-amino-acid polypeptide reads, in one-letter code: MCDQTFLVNVFGSCDKCFKQRALRPVFKKSQQLNYCSTCAEIMATDGLHENETLASLKSEAESLKGKLEEERAKLHDVELHQVAERVEALGQFVMKTRRTLKGHGNKVLCMDWCKDKRRIVSSSQDGKVIVWDSFTTNKEHAVTMPCTWVMACAYAPSGCAIACGGLDNKCSVYPLTFDKNENMAAKKKSVAMHTNYLSACSFTNSDMQILTASGDGTCALWDVESGQLLQSFHGHGADVLCLDLAPSETGNTFVSGGCDKKAMVWDMRSGQCVQAFETHESDVNSVRYYPSGDAFASGSDDATCRLYDLRADREVAIYSKESIIFGASSVDFSLSGRLLFAGYNDYTINVWDVLKGSRVSILFGHENRVSTLRVSPDGTAFCSGSWDHTLRVWA.

WD repeat units follow at residues Gly103–Ala142, Met145–Met184, Met193–His234, His236–Glu278, Thr279–Ile318, Ser320–Ile362, and Gly365–Trp394.

Belongs to the WD repeat G protein beta family. In terms of assembly, component of a complex composed of RGS9 (isoform RGS9-1), GNB5 and RGS9BP; within this complex, the presence of GNB5 stabilizes both itself and RGS9 and increases RGS9 GTPase-activating protein (GAP) activity. Interacts with RGS7, forming the RGS7-GNB5 complex; within this complex, the presence of GNB5 increases RGS7 GTPase-activating protein (GAP) activity. Interacts with GPR158; promotes the GTPase activator activity of the RGS7-GNB5 complex in absence of glycine, in contrast GTPase activator activity of the RGS7-GNB5 complex is inhibited in presence of glycine. Interacts with RGS6. In terms of tissue distribution, isoform 1 is only detected in retina. Isoform 2 is detected in brain (at protein level). Isoform 2 is detected in brain.

The protein resides in the membrane. Functionally, enhances GTPase-activating protein (GAP) activity of regulator of G protein signaling (RGS) proteins, such as RGS7 and RGS9, hence involved in the termination of the signaling initiated by the G protein coupled receptors (GPCRs) by accelerating the GTP hydrolysis on the G-alpha subunits, thereby promoting their inactivation. Increases RGS7 GTPase-activating protein (GAP) activity, thereby regulating mood and cognition. Increases RGS9 GTPase-activating protein (GAP) activity, hence contributes to the deactivation of G protein signaling initiated by D(2) dopamine receptors. May play an important role in neuronal signaling, including in the parasympathetic, but not sympathetic, control of heart rate. This Mus musculus (Mouse) protein is Guanine nucleotide-binding protein subunit beta-5 (Gnb5).